Here is a 90-residue protein sequence, read N- to C-terminus: MGSSSFLVLMVSLALVTLVAVEGVKEGIEKAGVCPADNVRCFKSDPPQCHTDQDCLGERKCCYLHCGFKCVIPVKELEEGGNKDEDVSRP.

Residues 1–23 form the signal peptide; it reads MGSSSFLVLMVSLALVTLVAVEG. In terms of domain architecture, WAP spans 27-74; it reads GIEKAGVCPADNVRCFKSDPPQCHTDQDCLGERKCCYLHCGFKCVIPV. 4 cysteine pairs are disulfide-bonded: Cys-34/Cys-62, Cys-41/Cys-66, Cys-49/Cys-61, and Cys-55/Cys-70.

Its subcellular location is the secreted. Functionally, antibacterial protein. Putative acid-stable proteinase inhibitor. The polypeptide is WAP four-disulfide core domain protein 12 (WFDC12) (Gorilla gorilla gorilla (Western lowland gorilla)).